The following is a 116-amino-acid chain: Cocaine- and amphetamine-regulated transcript protein (116 aa).

An N-terminal signal peptide occupies residues 1 to 27 (MESPRLRLLPLLGAALLLLLPLLGALA). The residue at position 41 (tyrosine 41) is a Phosphotyrosine. Position 48 is a phosphoserine (serine 48). Cystine bridges form between cysteine 82–cysteine 100, cysteine 88–cysteine 108, and cysteine 102–cysteine 115.

This sequence belongs to the CART family.

Its subcellular location is the secreted. Satiety factor closely associated with the actions of leptin and neuropeptide y; this anorectic peptide inhibits both normal and starvation-induced feeding and completely blocks the feeding response induced by neuropeptide Y and regulated by leptin in the hypothalamus. This is Cocaine- and amphetamine-regulated transcript protein (CARTPT) from Bos taurus (Bovine).